The chain runs to 83 residues: uncharacterized protein (83 aa).

A helical transmembrane segment spans residues Ile50–Ile70.

It belongs to the plectrovirus ORF7 family.

The protein localises to the host membrane. This is an uncharacterized protein from Spiroplasma melliferum (SpV1).